The sequence spans 42 residues: Small protein MntS (42 aa).

Its subcellular location is the cytoplasm. Required for repression of mntH by MntR. May function as a chaperone that makes manganese more available by delivering it to the necessary cellular locations when manganese is limiting. This chain is Small protein MntS (mntS), found in Escherichia coli (strain K12).